The following is a 248-amino-acid chain: Ribonuclease PH (248 aa).

Residues R86 and 124–126 each bind phosphate; that span reads GTR.

It belongs to the RNase PH family. As to quaternary structure, homohexameric ring arranged as a trimer of dimers.

The catalysed reaction is tRNA(n+1) + phosphate = tRNA(n) + a ribonucleoside 5'-diphosphate. In terms of biological role, phosphorolytic 3'-5' exoribonuclease that plays an important role in tRNA 3'-end maturation. Removes nucleotide residues following the 3'-CCA terminus of tRNAs; can also add nucleotides to the ends of RNA molecules by using nucleoside diphosphates as substrates, but this may not be physiologically important. Probably plays a role in initiation of 16S rRNA degradation (leading to ribosome degradation) during starvation. The protein is Ribonuclease PH of Clostridium kluyveri (strain NBRC 12016).